The primary structure comprises 209 residues: Large ribosomal subunit protein uL3 (209 aa).

The span at 112-122 (GTTRGHGTQGN) shows a compositional bias: polar residues. Positions 112–146 (GTTRGHGTQGNIKRWGQSRGPETHGSRYHRIPGSM) are disordered.

This sequence belongs to the universal ribosomal protein uL3 family. In terms of assembly, part of the 50S ribosomal subunit. Forms a cluster with proteins L14 and L19.

Functionally, one of the primary rRNA binding proteins, it binds directly near the 3'-end of the 23S rRNA, where it nucleates assembly of the 50S subunit. This Lactobacillus johnsonii (strain CNCM I-12250 / La1 / NCC 533) protein is Large ribosomal subunit protein uL3.